The chain runs to 1914 residues: Diacylglycerol kinase eta (1914 aa).

Residues 1 to 10 (MSHLKLDTLH) show a composition bias toward basic and acidic residues. A disordered region spans residues 1–37 (MSHLKLDTLHVQRSPRGSRRSSRSSGRSSACSSGSIS). Residues 23–37 (RSSGRSSACSSGSIS) are compositionally biased toward low complexity. The PH domain maps to 82–175 (AIIKEGFLLK…WLGSLKTATA (94 aa)). 2 Phorbol-ester/DAG-type zinc fingers span residues 195–245 (HHHW…IANC) and 268–319 (PHQW…AVAC). In terms of domain architecture, DAGKc spans 350-486 (GNFSPLLVFV…DRWSIMVFEK (137 aa)). Disordered stretches follow at residues 621–642 (EKDQ…SEKE), 783–805 (GANI…NTPT), 1016–1053 (TLCS…PPRI), 1116–1135 (QHRG…TPTN), and 1175–1216 (PNTI…TVSL). Positions 1175 to 1187 (PNTILTTSTSPTK) are enriched in polar residues. Positions 1851–1914 (WSVNEVVTWL…LQAIKDLSEN (64 aa)) constitute an SAM domain.

It belongs to the eukaryotic diacylglycerol kinase family.

The protein resides in the cytoplasm. The catalysed reaction is a 1,2-diacyl-sn-glycerol + ATP = a 1,2-diacyl-sn-glycero-3-phosphate + ADP + H(+). Phosphorylates diacylglycerol (DAG) to generate phosphatidic acid (PA). This chain is Diacylglycerol kinase eta, found in Drosophila sechellia (Fruit fly).